Reading from the N-terminus, the 138-residue chain is ATP synthase epsilon chain 2 (138 aa).

It belongs to the ATPase epsilon chain family. F-type ATPases have 2 components, CF(1) - the catalytic core - and CF(0) - the membrane proton channel. CF(1) has five subunits: alpha(3), beta(3), gamma(1), delta(1), epsilon(1). CF(0) has three main subunits: a, b and c.

It localises to the cell inner membrane. Produces ATP from ADP in the presence of a proton gradient across the membrane. The sequence is that of ATP synthase epsilon chain 2 from Syntrophotalea carbinolica (strain DSM 2380 / NBRC 103641 / GraBd1) (Pelobacter carbinolicus).